Here is a 212-residue protein sequence, read N- to C-terminus: MLNGILGRKIGMTQIFTEKGETIPVTVIEAGPCVVTQLRTKDKDGYEAVQLGFGEIKPRKVTKPIQGHLKAAGRLVRFMREVKTTDLNAHNVGDVVNVDIFQIGEKIDVVGTSKGRGFAGVVKRHGFRGGPATHGQSDRHRAPGSIGSGTTPGRVWKNMRMAGRMGNDRVTVQNLEVVKIDLERHVILVKGSVPGAKNGLVMVSRAAKATKK.

Residues 127–153 are disordered; that stretch reads FRGGPATHGQSDRHRAPGSIGSGTTPG.

The protein belongs to the universal ribosomal protein uL3 family. As to quaternary structure, part of the 50S ribosomal subunit. Forms a cluster with proteins L14 and L19.

In terms of biological role, one of the primary rRNA binding proteins, it binds directly near the 3'-end of the 23S rRNA, where it nucleates assembly of the 50S subunit. This chain is Large ribosomal subunit protein uL3, found in Herpetosiphon aurantiacus (strain ATCC 23779 / DSM 785 / 114-95).